We begin with the raw amino-acid sequence, 116 residues long: Large ribosomal subunit protein bL19 (116 aa).

Belongs to the bacterial ribosomal protein bL19 family.

This protein is located at the 30S-50S ribosomal subunit interface and may play a role in the structure and function of the aminoacyl-tRNA binding site. This is Large ribosomal subunit protein bL19 from Magnetococcus marinus (strain ATCC BAA-1437 / JCM 17883 / MC-1).